Reading from the N-terminus, the 200-residue chain is Recoverin (200 aa).

Gly2 is lipidated: N-myristoyl glycine. 4 EF-hand domains span residues 25-60 (EEEL…FPDT), 61-96 (DPKA…TTAG), 97-132 (KTNQ…IFKM), and 147-182 (TPEK…NKEI). Position 39 is a cysteine sulfenic acid (-SOH) (Cys39). Residues Asp74, Asn76, Asp78, Thr80, Glu85, Asp110, Asp112, Asn114, Thr116, and Glu121 each coordinate Ca(2+). Residues 189–192 (EPQK) are interaction with GRK1.

Belongs to the recoverin family. Homodimer; disulfide-linked. Homodimerization is caused by prolonged intense illumination. May form a complex composed of RHO, GRK1 and RCVRN in a Ca(2+)-dependent manner; RCVRN prevents the interaction between GRK1 and RHO. Interacts (via C-terminus) with GRK1 (via N-terminus); the interaction is Ca(2+)-dependent. Post-translationally, the N-terminal glycine is linked to one of four different types of acyl groups. The most abundant is myristoleate (14:1), but 14:0, 14:2, and 12:0 acyl residues are also present. The Ca(2+) induced exposure of the myristoyl group, known as the calcium-myristoyl switch, promotes RCVRN binding to the photoreceptor cell membranes only when intracellular Ca(2+) concentration is high. In terms of processing, oxidation on Cys-39 occurs in response to prolonged intense illumination and results in the formation of disulfide homodimers, and to a lesser extent disulfide-linked heterodimers. As to expression, retina and pineal gland.

Its subcellular location is the photoreceptor inner segment. The protein resides in the cell projection. The protein localises to the cilium. It localises to the photoreceptor outer segment. It is found in the photoreceptor outer segment membrane. Its subcellular location is the perikaryon. In terms of biological role, acts as a calcium sensor and regulates phototransduction of cone and rod photoreceptor cells. Modulates light sensitivity of cone photoreceptor in dark and dim conditions. In response to high Ca(2+) levels induced by low light levels, prolongs RHO/rhodopsin activation in rod photoreceptor cells by binding to and inhibiting GRK1-mediated phosphorylation of RHO/rhodopsin. Plays a role in scotopic vision/enhances vision in dim light by enhancing signal transfer between rod photoreceptors and rod bipolar cells. Improves rod photoreceptor sensitivity in dim light and mediates response of rod photoreceptors to facilitate detection of change and motion in bright light. This chain is Recoverin (RCVRN), found in Homo sapiens (Human).